The sequence spans 191 residues: Leucyl/phenylalanyl-tRNA--protein transferase (191 aa).

This sequence belongs to the L/F-transferase family.

It localises to the cytoplasm. It carries out the reaction N-terminal L-lysyl-[protein] + L-leucyl-tRNA(Leu) = N-terminal L-leucyl-L-lysyl-[protein] + tRNA(Leu) + H(+). The enzyme catalyses N-terminal L-arginyl-[protein] + L-leucyl-tRNA(Leu) = N-terminal L-leucyl-L-arginyl-[protein] + tRNA(Leu) + H(+). It catalyses the reaction L-phenylalanyl-tRNA(Phe) + an N-terminal L-alpha-aminoacyl-[protein] = an N-terminal L-phenylalanyl-L-alpha-aminoacyl-[protein] + tRNA(Phe). Functionally, functions in the N-end rule pathway of protein degradation where it conjugates Leu, Phe and, less efficiently, Met from aminoacyl-tRNAs to the N-termini of proteins containing an N-terminal arginine or lysine. This chain is Leucyl/phenylalanyl-tRNA--protein transferase, found in Rubrobacter xylanophilus (strain DSM 9941 / JCM 11954 / NBRC 16129 / PRD-1).